Reading from the N-terminus, the 357-residue chain is Neutral protease 2 homolog BDCG_00922 (357 aa).

Residues 1–19 (MRSPQSILAIVAFATTAIA) form the signal peptide. Residues 20–182 (GVVPSTEKRA…FASLNQFSKR (163 aa)) constitute a propeptide that is removed on maturation. Cystine bridges form between Cys188-Cys259, Cys266-Cys284, and Cys297-Cys357. His308 contacts Zn(2+). Residue Glu309 is part of the active site. Residues His312 and Asp323 each coordinate Zn(2+).

It belongs to the peptidase M35 family. Requires Zn(2+) as cofactor.

The protein localises to the secreted. It catalyses the reaction Preferential cleavage of bonds with hydrophobic residues in P1'. Also 3-Asn-|-Gln-4 and 8-Gly-|-Ser-9 bonds in insulin B chain.. In terms of biological role, secreted metalloproteinase that allows assimilation of proteinaceous substrates. Shows high activities on basic nuclear substrates such as histone and protamine. The sequence is that of Neutral protease 2 homolog BDCG_00922 from Ajellomyces dermatitidis (strain ER-3 / ATCC MYA-2586) (Blastomyces dermatitidis).